We begin with the raw amino-acid sequence, 215 residues long: Probable phosphoglycerate mutase GpmB (215 aa).

Residues 8–15 (RHGETQWN), 21–22 (QG), arginine 58, arginine 60, 82–85 (ELNM), 104–105 (RR), and 151–152 (GI) each bind substrate. Histidine 9 acts as the Tele-phosphohistidine intermediate in catalysis. The Proton donor/acceptor role is filled by glutamate 82.

The protein belongs to the phosphoglycerate mutase family. GpmB subfamily.

The catalysed reaction is (2R)-2-phosphoglycerate = (2R)-3-phosphoglycerate. Its pathway is carbohydrate degradation; glycolysis; pyruvate from D-glyceraldehyde 3-phosphate: step 3/5. The sequence is that of Probable phosphoglycerate mutase GpmB from Escherichia fergusonii (strain ATCC 35469 / DSM 13698 / CCUG 18766 / IAM 14443 / JCM 21226 / LMG 7866 / NBRC 102419 / NCTC 12128 / CDC 0568-73).